The following is an 821-amino-acid chain: Fibroblast growth factor receptor 2 (821 aa).

An N-terminal signal peptide occupies residues 1-21 (MVSWGRFICLVLVTMATLSLA). At 22–377 (RPSFSLVEDT…EITASPDYLE (356 aa)) the chain is on the extracellular side. Positions 25–125 (FSLVEDTTLE…ETWIFMVNVT (101 aa)) constitute an Ig-like C2-type 1 domain. The cysteines at positions 62 and 107 are disulfide-linked. 2 N-linked (GlcNAc...) asparagine glycosylation sites follow: asparagine 83 and asparagine 123. The segment at 129–151 (SSGDDEDDTDSSEDVVSENRSNQ) is disordered. A compositionally biased stretch (acidic residues) spans 131 to 144 (GDDEDDTDSSEDVV). Residue asparagine 147 is glycosylated (N-linked (GlcNAc...) asparagine). 2 consecutive Ig-like C2-type domains span residues 154 to 247 (PYWT…YHLD) and 256 to 358 (PILQ…AWLT). Residues 161–178 (KMEKRLHACPAANTVKFR) are heparin-binding. A disulfide bridge links cysteine 179 with cysteine 231. N-linked (GlcNAc...) asparagine glycosylation is found at asparagine 228, asparagine 241, asparagine 265, asparagine 297, asparagine 318, and asparagine 331. Cysteine 278 and cysteine 342 form a disulfide bridge. The helical transmembrane segment at 378-398 (IAIYCIGVFLIACMVVTVIFC) threads the bilayer. Residues 399 to 821 (RMKTTTKKPD…YPHINGSVKT (423 aa)) are Cytoplasmic-facing. The residue at position 466 (tyrosine 466) is a Phosphotyrosine; by autocatalysis. The Protein kinase domain occupies 481–770 (LTLGKPLGEG…LTLTTNEEYL (290 aa)). Residues 487–495 (LGEGCFGQV), lysine 517, 565–567 (EYA), and asparagine 571 each bind ATP. Phosphotyrosine; by autocatalysis occurs at positions 586 and 588. Aspartate 626 (proton acceptor) is an active-site residue. Phosphotyrosine; by autocatalysis is present on residues tyrosine 656, tyrosine 657, and tyrosine 769. Phosphoserine is present on serine 780.

Belongs to the protein kinase superfamily. Tyr protein kinase family. Fibroblast growth factor receptor subfamily. In terms of assembly, monomer. Homodimer after ligand binding. Interacts predominantly with FGF1 and FGF2, but can also interact with FGF3, FGF4, FGF6, FGF7, FGF8, FGF9, FGF10, FGF17, FGF18 and FGF22 (in vitro). Ligand specificity is determined by tissue-specific expression of isoforms, and differences in the third Ig-like domain are crucial for ligand specificity. Affinity for fibroblast growth factors (FGFs) is increased by heparan sulfate glycosaminoglycans that function as coreceptors. Likewise, KLB increases the affinity for FGF19 and FGF21. Interacts with PLCG1. Interacts with GRB2 and PAK4. Interacts with FLRT2. Post-translationally, autophosphorylated. Binding of FGF family members together with heparan sulfate proteoglycan or heparin promotes receptor dimerization and autophosphorylation on tyrosine residues. Autophosphorylation occurs in trans between the two FGFR molecules present in the dimer. N-glycosylated in the endoplasmic reticulum. The N-glycan chains undergo further maturation to an Endo H-resistant form in the Golgi apparatus. In terms of processing, ubiquitinated. FGFR2 is rapidly ubiquitinated after autophosphorylation, leading to internalization and degradation. Subject to degradation both in lysosomes and by the proteasome.

It is found in the cell membrane. Its subcellular location is the golgi apparatus. It localises to the cytoplasmic vesicle. The enzyme catalyses L-tyrosyl-[protein] + ATP = O-phospho-L-tyrosyl-[protein] + ADP + H(+). Its activity is regulated as follows. Present in an inactive conformation in the absence of bound ligand. Ligand binding leads to dimerization and activation by autophosphorylation on tyrosine residues. In terms of biological role, tyrosine-protein kinase that acts as a cell-surface receptor for fibroblast growth factors and plays an essential role in the regulation of cell proliferation, differentiation, migration and apoptosis, and in the regulation of embryonic development. Required for normal embryonic patterning, trophoblast function, limb bud development, lung morphogenesis, osteogenesis and skin development. Plays an essential role in the regulation of osteoblast differentiation, proliferation and apoptosis, and is required for normal skeleton development. Promotes cell proliferation in keratinocytes and immature osteoblasts, but promotes apoptosis in differentiated osteoblasts. Phosphorylates PLCG1, FRS2 and PAK4. Ligand binding leads to the activation of several signaling cascades. Activation of PLCG1 leads to the production of the cellular signaling molecules diacylglycerol and inositol 1,4,5-trisphosphate. Phosphorylation of FRS2 triggers recruitment of GRB2, GAB1, PIK3R1 and SOS1, and mediates activation of RAS, MAPK1/ERK2, MAPK3/ERK1 and the MAP kinase signaling pathway, as well as of the AKT1 signaling pathway. FGFR2 signaling is down-regulated by ubiquitination, internalization and degradation. Mutations that lead to constitutive kinase activation or impair normal FGFR2 maturation, internalization and degradation lead to aberrant signaling. Over-expressed FGFR2 promotes activation of STAT1. This chain is Fibroblast growth factor receptor 2 (Fgfr2), found in Mus musculus (Mouse).